The chain runs to 505 residues: Probable cytosol aminopeptidase (505 aa).

Mn(2+) contacts are provided by K268 and D273. The active site involves K280. Positions 291, 350, and 352 each coordinate Mn(2+). R354 is an active-site residue.

Belongs to the peptidase M17 family. The cofactor is Mn(2+).

It localises to the cytoplasm. It catalyses the reaction Release of an N-terminal amino acid, Xaa-|-Yaa-, in which Xaa is preferably Leu, but may be other amino acids including Pro although not Arg or Lys, and Yaa may be Pro. Amino acid amides and methyl esters are also readily hydrolyzed, but rates on arylamides are exceedingly low.. The catalysed reaction is Release of an N-terminal amino acid, preferentially leucine, but not glutamic or aspartic acids.. Its function is as follows. Presumably involved in the processing and regular turnover of intracellular proteins. Catalyzes the removal of unsubstituted N-terminal amino acids from various peptides. The polypeptide is Probable cytosol aminopeptidase (Syntrophobacter fumaroxidans (strain DSM 10017 / MPOB)).